Reading from the N-terminus, the 76-residue chain is Heat shock factor-binding protein 1 (76 aa).

It belongs to the HSBP1 family. As to quaternary structure, homohexamer. Associates with heptad repeats of HSF1 trimers and probably also HSF1 monomers, and with HSP70. Association with HSF1 trimers and HSP70 coincides with attenuation of heat shock response and the conversion of HSF1 trimer to monomer.

Its subcellular location is the nucleus. Its function is as follows. Negative regulator of the heat shock response. Negatively affects HSF1 DNA-binding activity. May have a role in the suppression of the activation of the stress response during the aging process. The protein is Heat shock factor-binding protein 1 (HSBP1) of Bos taurus (Bovine).